We begin with the raw amino-acid sequence, 195 residues long: Pyruvoyl-dependent arginine decarboxylase AaxB (195 aa).

At Ser53 the chain carries Pyruvic acid (Ser).

It belongs to the pyruvoyl-dependent arginine decarboxylase family. Trimer of an alpha-beta dimer. It depends on pyruvate as a cofactor.

The protein localises to the cytoplasm. It catalyses the reaction L-arginine + H(+) = agmatine + CO2. Part of the AaxABC system, catalyzes the decarboxylation of L-arginine. The arginine uptake by the bacterium in the macrophage may be a virulence factor against the host innate immune response. The polypeptide is Pyruvoyl-dependent arginine decarboxylase AaxB (aaxB) (Chlamydia muridarum (strain MoPn / Nigg)).